The primary structure comprises 151 residues: High mobility group B protein 14 (151 aa).

Disordered regions lie at residues 1-62 (MTKR…QTKM) and 132-151 (TKRMESGAHDESETDSDYSE). The segment covering 7–20 (KSGPLSPSCSGGSS) has biased composition (low complexity). Over residues 35-56 (RSTRLRLQPLRKPKTSPKKKPV) the composition is skewed to basic residues. A DNA-binding region (HMG box) is located at residues 63–132 (PKKPATAFFF…EFHRAMTEYT (70 aa)). A compositionally biased stretch (basic and acidic residues) spans 132 to 142 (TKRMESGAHDE). Residue serine 150 is modified to Phosphoserine.

The protein belongs to the HMGB family.

It localises to the nucleus. This is High mobility group B protein 14 (HMGB14) from Arabidopsis thaliana (Mouse-ear cress).